A 287-amino-acid polypeptide reads, in one-letter code: Kit ligand (287 aa).

The N-terminal stretch at 1–25 (MKKAQTWIITCFCLQLLLLNPLVKT) is a signal peptide. Residues 26–225 (QSSCGNPVTD…LGFISSSSLQ (200 aa)) lie on the Extracellular side of the membrane. 2 cysteine pairs are disulfide-bonded: C29–C117 and C68–C167. 6 N-linked (GlcNAc...) asparagine glycosylation sites follow: N100, N106, N149, N178, N200, and N206. Residues 226 to 246 (GISIALTSLLSLLIGFILGVI) form a helical membrane-spanning segment. At 247–287 (YWKKTHPKSRPESNETTQCHGCQEENEISMLQQKEKEHLQV) the chain is on the cytoplasmic side.

The protein belongs to the SCF family. As to quaternary structure, homodimer, non-covalently linked. In terms of processing, a soluble form is produced by proteolytic processing of isoform 1 in the extracellular domain.

The protein localises to the cell membrane. Its subcellular location is the secreted. It localises to the cytoplasm. The protein resides in the cytoskeleton. It is found in the cell projection. The protein localises to the lamellipodium. Its subcellular location is the filopodium. In terms of biological role, ligand for the receptor-type protein-tyrosine kinase KIT. Plays an essential role in the regulation of cell survival and proliferation, hematopoiesis, stem cell maintenance, gametogenesis, mast cell development, migration and function, and in melanogenesis. KITLG/SCF binding can activate several signaling pathways. Acts synergistically with other cytokines, probably interleukins. This chain is Kit ligand (KITLG), found in Coturnix japonica (Japanese quail).